The following is a 228-amino-acid chain: Protein N-lysine methyltransferase METTL21D (228 aa).

An N-acetylalanine modification is found at A2. S-adenosyl-L-methionine is bound by residues W43, 75–77 (GSG), D96, W126, A142, and Y147.

This sequence belongs to the methyltransferase superfamily. METTL21 family. In terms of assembly, interacts with ALKBH6. Interacts with ASPSCR1 and UBXN6; interaction with ASPSCR1, but not with UBXN6, enhances VCP methylation. Widely expressed.

The protein resides in the cytoplasm. It carries out the reaction L-lysyl-[protein] + 3 S-adenosyl-L-methionine = N(6),N(6),N(6)-trimethyl-L-lysyl-[protein] + 3 S-adenosyl-L-homocysteine + 3 H(+). Protein N-lysine methyltransferase that specifically trimethylates 'Lys-315' of VCP/p97; this modification may decrease VCP ATPase activity. This Mus musculus (Mouse) protein is Protein N-lysine methyltransferase METTL21D (Vcpkmt).